The primary structure comprises 305 residues: Ornithine carbamoyltransferase (305 aa).

Carbamoyl phosphate-binding positions include 50–53 (STRT), Gln77, Arg101, and 128–131 (HPCQ). L-ornithine contacts are provided by residues Asn159, Asp222, and 226–227 (SM). Carbamoyl phosphate is bound by residues 262 to 263 (CL) and Arg290.

This sequence belongs to the aspartate/ornithine carbamoyltransferase superfamily. OTCase family.

The protein resides in the cytoplasm. The catalysed reaction is carbamoyl phosphate + L-ornithine = L-citrulline + phosphate + H(+). It participates in amino-acid biosynthesis; L-arginine biosynthesis; L-arginine from L-ornithine and carbamoyl phosphate: step 1/3. Its function is as follows. Reversibly catalyzes the transfer of the carbamoyl group from carbamoyl phosphate (CP) to the N(epsilon) atom of ornithine (ORN) to produce L-citrulline. The polypeptide is Ornithine carbamoyltransferase (Synechococcus elongatus (strain ATCC 33912 / PCC 7942 / FACHB-805) (Anacystis nidulans R2)).